A 419-amino-acid chain; its full sequence is UDP-N-acetylglucosamine 1-carboxyvinyltransferase (419 aa).

Residue 22–23 (KN) participates in phosphoenolpyruvate binding. R91 serves as a coordination point for UDP-N-acetyl-alpha-D-glucosamine. The active-site Proton donor is the C115. C115 bears the 2-(S-cysteinyl)pyruvic acid O-phosphothioketal mark. Residues 120–124 (RPVDL), 160–163 (KVSV), D305, and I327 contribute to the UDP-N-acetyl-alpha-D-glucosamine site.

Belongs to the EPSP synthase family. MurA subfamily.

The protein localises to the cytoplasm. It catalyses the reaction phosphoenolpyruvate + UDP-N-acetyl-alpha-D-glucosamine = UDP-N-acetyl-3-O-(1-carboxyvinyl)-alpha-D-glucosamine + phosphate. It participates in cell wall biogenesis; peptidoglycan biosynthesis. In terms of biological role, cell wall formation. Adds enolpyruvyl to UDP-N-acetylglucosamine. In Tolumonas auensis (strain DSM 9187 / NBRC 110442 / TA 4), this protein is UDP-N-acetylglucosamine 1-carboxyvinyltransferase.